A 252-amino-acid chain; its full sequence is 5'-nucleotidase SurE (252 aa).

Positions 8, 9, 39, and 95 each coordinate a divalent metal cation.

The protein belongs to the SurE nucleotidase family. The cofactor is a divalent metal cation.

The protein resides in the cytoplasm. It carries out the reaction a ribonucleoside 5'-phosphate + H2O = a ribonucleoside + phosphate. Nucleotidase that shows phosphatase activity on nucleoside 5'-monophosphates. The polypeptide is 5'-nucleotidase SurE (Thermoanaerobacter sp. (strain X514)).